The primary structure comprises 261 residues: MASAELSREENVYMAKLAEQAERYEEMVEFMEKVAKTVDSEELTVEERNLLSVAYKNVIGARRASWRIISSIEQKEEGRGNEDRVTLIKDYRGKIETELTKICDGILKLLESHLVPSSTAPESKVFYLKMKGDYYRYLAEFKTGAERKDAAENTMVAYKAAQDIALAELAPTHPIRLGLALNFSVFYYEILNSPDRACSLAKQAFDEAISELDTLSEESYKDSTLIMQLLHDNLTLWTSDISEDPAEEIREAPKHDLSEGQ.

The protein belongs to the 14-3-3 family.

Its function is as follows. Is associated with a DNA binding complex to bind to the G box, a well-characterized cis-acting DNA regulatory element found in plant genes. The protein is 14-3-3-like protein GF14-12 (GRF2) of Zea mays (Maize).